A 433-amino-acid polypeptide reads, in one-letter code: D-amino acid dehydrogenase (433 aa).

3-17 (IVVLGAGVLGVTSAW) lines the FAD pocket.

The protein belongs to the DadA oxidoreductase family. The cofactor is FAD.

It carries out the reaction a D-alpha-amino acid + A + H2O = a 2-oxocarboxylate + AH2 + NH4(+). Its pathway is amino-acid degradation; D-alanine degradation; NH(3) and pyruvate from D-alanine: step 1/1. Oxidative deamination of D-amino acids. The polypeptide is D-amino acid dehydrogenase (Paracoccus denitrificans (strain Pd 1222)).